The following is an 82-amino-acid chain: Large ribosomal subunit protein eL14 (82 aa).

The protein belongs to the eukaryotic ribosomal protein eL14 family.

The polypeptide is Large ribosomal subunit protein eL14 (Pyrococcus abyssi (strain GE5 / Orsay)).